The chain runs to 361 residues: Chorismate synthase (361 aa).

R47 contacts NADP(+). Residues 124–126 (RAS), G286, 301–305 (KPTAT), and R327 each bind FMN.

Belongs to the chorismate synthase family. Homotetramer. FMNH2 serves as cofactor.

It catalyses the reaction 5-O-(1-carboxyvinyl)-3-phosphoshikimate = chorismate + phosphate. It participates in metabolic intermediate biosynthesis; chorismate biosynthesis; chorismate from D-erythrose 4-phosphate and phosphoenolpyruvate: step 7/7. In terms of biological role, catalyzes the anti-1,4-elimination of the C-3 phosphate and the C-6 proR hydrogen from 5-enolpyruvylshikimate-3-phosphate (EPSP) to yield chorismate, which is the branch point compound that serves as the starting substrate for the three terminal pathways of aromatic amino acid biosynthesis. This reaction introduces a second double bond into the aromatic ring system. In Akkermansia muciniphila (strain ATCC BAA-835 / DSM 22959 / JCM 33894 / BCRC 81048 / CCUG 64013 / CIP 107961 / Muc), this protein is Chorismate synthase.